The following is a 155-amino-acid chain: Ribonuclease HI (155 aa).

Residues 1–142 (MTKQVEIFTD…CDELARAAAE (142 aa)) form the RNase H type-1 domain. The Mg(2+) site is built by aspartate 10, glutamate 48, aspartate 70, and aspartate 134.

Belongs to the RNase H family. As to quaternary structure, monomer. The cofactor is Mg(2+).

The protein localises to the cytoplasm. It catalyses the reaction Endonucleolytic cleavage to 5'-phosphomonoester.. Functionally, endonuclease that specifically degrades the RNA of RNA-DNA hybrids. This chain is Ribonuclease HI, found in Vibrio vulnificus (strain CMCP6).